Consider the following 373-residue polypeptide: Methylmalonyl-CoA decarboxylase subunit beta (373 aa).

10 helical membrane passes run 17-37 (FLAFTTGNAIMILVGLILLYL), 38-58 (AFAREFEPLLLGPIAFGCLLA), 81-101 (IFPPLIFLGVGAMTDFGPLIA), 106-126 (LLLGAAAQIGVFAALGGAMML), 132-152 (EAAAIGIIGGADGPTSIYLAT), 156-176 (PHLLGAIAVAAYSYMSLVPLI), 206-226 (IVFPIVATIFISLLLPSITSL), 257-277 (VTIFLATGTGLTMSAEHFLSL), 280-300 (IKIILLGLFAFICGTAGGVLF), and 343-363 (FLLMHAMGPNVAGVIGTAVAA).

It belongs to the GcdB/MmdB/OadB family. In terms of assembly, the methylmalonyl-CoA decarboxylase is composed of five subunits: the carboxyltransferase alpha subunit (MmdA), the tunnel beta subunit (MmdB), the biotin-containing gamma subunit (MmdC), and the delta (MmdD) and epsilon (MmdE) subunits. The N-terminus is blocked.

Its subcellular location is the cell membrane. The enzyme catalyses (S)-methylmalonyl-CoA + Na(+)(in) + H(+)(out) = propanoyl-CoA + Na(+)(out) + CO2. Completely inhibited by avidin. Its function is as follows. Tunnel subunit of the sodium ion pump methylmalonyl-CoA decarboxylase, which converts the chemical energy of a decarboxylation reaction into an electrochemical gradient of Na(+) ions across the cytoplasmic membrane, thereby creating a sodium ion motive force that is used for ATP synthesis. The beta subunit catalyzes the decarboxylation of the carboxybiotin carrier protein and the coupled export of Na(+) ions. Can also convert malonyl-CoA into acetyl-CoA. This chain is Methylmalonyl-CoA decarboxylase subunit beta, found in Veillonella parvula (Staphylococcus parvulus).